Here is a 173-residue protein sequence, read N- to C-terminus: MDVTIQHPWFKRALGPFYPSRLFDQFFGEGLFEYDLLPFLSSTISPYYRQSLFRTVLDSGISEVRSDRDQFLILLDVKHFSPEDLTVKVLDDFVEIHGKHNERQDDHGYISREFHRRYRLPSNVDQSALSCSLSADGMLTFCGPKVQSGMDASHSERAIPVSREEKPSSAPSS.

An N-acetylmethionine modification is found at Met1. Residues 1-63 (MDVTIQHPWF…RTVLDSGISE (63 aa)) are required for complex formation with BFSP1 and BFSP2. The residue at position 6 (Gln6) is a Deamidated glutamine; partial. Ser45 carries the post-translational modification Phosphoserine. Gln50 carries the deamidated glutamine; partial modification. One can recognise a sHSP domain in the interval 52 to 162 (LFRTVLDSGI…SHSERAIPVS (111 aa)). An N6-acetyllysine modification is found at Lys99. His100 is a binding site for Zn(2+). At Asn101 the chain carries Deamidated asparagine; partial. Zn(2+)-binding residues include Glu102 and His107. Ser122 is subject to Phosphoserine. Asn123 bears the Deamidated asparagine; partial mark. Cys131 and Cys142 are joined by a disulfide. Gln147 carries the post-translational modification Deamidated glutamine; partial. Positions 147 to 173 (QSGMDASHSERAIPVSREEKPSSAPSS) are disordered. Residues 153 to 167 (SHSERAIPVSREEKP) are compositionally biased toward basic and acidic residues. Position 154 (His154) interacts with Zn(2+). Residue Ser162 is glycosylated (O-linked (GlcNAc) serine).

The protein belongs to the small heat shock protein (HSP20) family. In terms of assembly, heteromer composed of three CRYAA and one CRYAB subunits. Inter-subunit bridging via zinc ions enhances stability, which is crucial as there is no protein turn over in the lens. Can also form homodimers and homotetramers (dimers of dimers) which serve as the building blocks of homooligomers. Within homooligomers, the zinc-binding motif is created from residues of 3 different molecules. His-100 and Glu-102 from one molecule are ligands of the zinc ion, and His-107 and His-154 residues from additional molecules complete the site with tetrahedral coordination geometry. Part of a complex required for lens intermediate filament formation composed of BFSP1, BFSP2 and CRYAA. Undergoes age-dependent proteolytical cleavage at the C-terminus.

The protein localises to the cytoplasm. It is found in the nucleus. Contributes to the transparency and refractive index of the lens. In its oxidized form (absence of intramolecular disulfide bond), acts as a chaperone, preventing aggregation of various proteins under a wide range of stress conditions. Required for the correct formation of lens intermediate filaments as part of a complex composed of BFSP1, BFSP2 and CRYAA. The sequence is that of Alpha-crystallin A chain (CRYAA) from Procavia capensis (Rock hyrax).